Here is a 103-residue protein sequence, read N- to C-terminus: UPF0145 protein NT01CX_0170 (103 aa).

Belongs to the UPF0145 family.

The sequence is that of UPF0145 protein NT01CX_0170 from Clostridium novyi (strain NT).